The chain runs to 1060 residues: Isoleucine--tRNA ligase (1060 aa).

A 'HIGH' region motif is present at residues 55–65; that stretch reads PTANGTPGVHH. Residues 608–612 carry the 'KMSKS' region motif; that stretch reads KMSKH. Lys611 is an ATP binding site.

It belongs to the class-I aminoacyl-tRNA synthetase family. IleS type 2 subfamily. Monomer. The cofactor is Zn(2+).

Its subcellular location is the cytoplasm. The catalysed reaction is tRNA(Ile) + L-isoleucine + ATP = L-isoleucyl-tRNA(Ile) + AMP + diphosphate. Functionally, catalyzes the attachment of isoleucine to tRNA(Ile). As IleRS can inadvertently accommodate and process structurally similar amino acids such as valine, to avoid such errors it has two additional distinct tRNA(Ile)-dependent editing activities. One activity is designated as 'pretransfer' editing and involves the hydrolysis of activated Val-AMP. The other activity is designated 'posttransfer' editing and involves deacylation of mischarged Val-tRNA(Ile). This chain is Isoleucine--tRNA ligase, found in Thermobifida fusca (strain YX).